The following is a 427-amino-acid chain: 3-phosphoshikimate 1-carboxyvinyltransferase (427 aa).

Residues lysine 20, serine 21, and arginine 25 each contribute to the 3-phosphoshikimate site. Lysine 20 provides a ligand contact to phosphoenolpyruvate. Phosphoenolpyruvate-binding residues include glycine 92 and arginine 120. Residues serine 166, glutamine 168, aspartate 312, and lysine 339 each coordinate 3-phosphoshikimate. Glutamine 168 serves as a coordination point for phosphoenolpyruvate. Residue aspartate 312 is the Proton acceptor of the active site. 2 residues coordinate phosphoenolpyruvate: arginine 343 and arginine 385.

The protein belongs to the EPSP synthase family. As to quaternary structure, monomer.

It is found in the cytoplasm. The enzyme catalyses 3-phosphoshikimate + phosphoenolpyruvate = 5-O-(1-carboxyvinyl)-3-phosphoshikimate + phosphate. It functions in the pathway metabolic intermediate biosynthesis; chorismate biosynthesis; chorismate from D-erythrose 4-phosphate and phosphoenolpyruvate: step 6/7. In terms of biological role, catalyzes the transfer of the enolpyruvyl moiety of phosphoenolpyruvate (PEP) to the 5-hydroxyl of shikimate-3-phosphate (S3P) to produce enolpyruvyl shikimate-3-phosphate and inorganic phosphate. The sequence is that of 3-phosphoshikimate 1-carboxyvinyltransferase from Streptococcus pyogenes serotype M4 (strain MGAS10750).